The following is a 488-amino-acid chain: Zinc metalloproteinase-disintegrin agkistin (488 aa).

A signal peptide spans 1 to 20; sequence MIQVLLVTICLAVFPYQGSS. Positions 21–195 are excised as a propeptide; that stretch reads IILESGNVND…NFPPDGRIEF (175 aa). Positions 198–394 constitute a Peptidase M12B domain; the sequence is RYIELVIVAD…NPLASYCLYN (197 aa). Position 201 (Glu201) interacts with Ca(2+). A glycan (N-linked (GlcNAc...) asparagine) is linked at Asn258. Position 285 (Asp285) interacts with Ca(2+). Intrachain disulfides connect Cys309/Cys391, Cys349/Cys373, and Cys351/Cys356. His334 serves as a coordination point for Zn(2+). Glu335 is an active-site residue. His338 and His344 together coordinate Zn(2+). Residues Cys391, Asn394, Val406, Asn409, Glu413, Glu416, and Asp419 each coordinate Ca(2+). Positions 404 to 488 constitute a Disintegrin domain; sequence PPVCGNYYLE…AGCPRNPSHA (85 aa). Disulfide bonds link Cys407–Cys426, Cys418–Cys436, Cys420–Cys431, Cys430–Cys453, Cys444–Cys450, Cys449–Cys474, and Cys462–Cys481. The short motif at 466–468 is the Cell attachment site element; sequence RGD.

It belongs to the venom metalloproteinase (M12B) family. P-II subfamily. P-IIb sub-subfamily. In terms of assembly, monomer. Zn(2+) is required as a cofactor. In terms of tissue distribution, expressed by the venom gland.

It is found in the secreted. Its function is as follows. Inhibits ADP-induced human platelet aggregation, inhibits bovine aortic endothelial cells (BAEC) migration, has anti-angiogenic activity and induces BAEC and human micro-vascular endothelial cell (HMEC) apoptosis. The metalloproteinase domain may act in hemorrhage. In Gloydius halys (Chinese water mocassin), this protein is Zinc metalloproteinase-disintegrin agkistin.